A 337-amino-acid chain; its full sequence is tRNA N6-adenosine threonylcarbamoyltransferase (337 aa).

Fe cation contacts are provided by His-110 and His-114. Residues 133 to 137 (LVSGK), Asp-166, Gly-179, and Asn-271 contribute to the substrate site. Asp-300 is a binding site for Fe cation.

This sequence belongs to the KAE1 / TsaD family. Requires Fe(2+) as cofactor.

It is found in the cytoplasm. It carries out the reaction L-threonylcarbamoyladenylate + adenosine(37) in tRNA = N(6)-L-threonylcarbamoyladenosine(37) in tRNA + AMP + H(+). In terms of biological role, required for the formation of a threonylcarbamoyl group on adenosine at position 37 (t(6)A37) in tRNAs that read codons beginning with adenine. Is involved in the transfer of the threonylcarbamoyl moiety of threonylcarbamoyl-AMP (TC-AMP) to the N6 group of A37, together with TsaE and TsaB. TsaD likely plays a direct catalytic role in this reaction. This Buchnera aphidicola subsp. Schizaphis graminum (strain Sg) protein is tRNA N6-adenosine threonylcarbamoyltransferase.